We begin with the raw amino-acid sequence, 202 residues long: Dephospho-CoA kinase (202 aa).

The region spanning 5-202 (ILGLTGGIGS…FYLTLRGGQP (198 aa)) is the DPCK domain. Residue 13-18 (GSGKSA) participates in ATP binding.

Belongs to the CoaE family.

Its subcellular location is the cytoplasm. The catalysed reaction is 3'-dephospho-CoA + ATP = ADP + CoA + H(+). The protein operates within cofactor biosynthesis; coenzyme A biosynthesis; CoA from (R)-pantothenate: step 5/5. In terms of biological role, catalyzes the phosphorylation of the 3'-hydroxyl group of dephosphocoenzyme A to form coenzyme A. The polypeptide is Dephospho-CoA kinase (Stutzerimonas stutzeri (Pseudomonas stutzeri)).